The sequence spans 102 residues: Small ribosomal subunit protein uS10 (102 aa).

The protein belongs to the universal ribosomal protein uS10 family. In terms of assembly, part of the 30S ribosomal subunit.

In terms of biological role, involved in the binding of tRNA to the ribosomes. The protein is Small ribosomal subunit protein uS10 of Syntrophotalea carbinolica (strain DSM 2380 / NBRC 103641 / GraBd1) (Pelobacter carbinolicus).